Here is a 236-residue protein sequence, read N- to C-terminus: EF-hand domain-containing protein D1 (236 aa).

The disordered stretch occupies residues 1 to 48 (MASEELASKLQRRLQWEEGDSGLQPAPGAAPDPEPQPQPPAWAPTARA). Over residues 28 to 42 (GAAPDPEPQPQPPAW) the composition is skewed to pro residues. EF-hand domains lie at 87–122 (RLIK…LGAP) and 123–158 (QTHL…AAAG). Ca(2+) contacts are provided by Asp100, Asp104, Glu111, Asp136, Asp138, Asp140, Lys142, and Glu147.

Its subcellular location is the mitochondrion inner membrane. Acts as a calcium sensor for mitochondrial flash (mitoflash) activation, an event characterized by stochastic bursts of superoxide production. May play a role in neuronal differentiation. This chain is EF-hand domain-containing protein D1 (EFHD1), found in Bos taurus (Bovine).